The following is a 264-amino-acid chain: MTTQSLPDFHIVIPARYASQRFPQKLMADLGGKPVLQWVYELALKAGAQSVTIATDHQLIEKAAIGFGASVVMTRDDHENGTERLAEVAAKMDWQGDEIVVNVQGDEPFLPVNLIHSSVIALNQDKEAEMATVACAIDQVEDFFNPNVVKVVCDEKQRALYFSRSPMPWDRDGFASNPDRTGLLPVGFPALRHIGLYVYRASLLAKYADLPMSPLERWEKLEQLRFLHQGIKVQVALADGLPTHGVDTPEDLEKLRYQLSLDSI.

This sequence belongs to the KdsB family.

The protein resides in the cytoplasm. The catalysed reaction is 3-deoxy-alpha-D-manno-oct-2-ulosonate + CTP = CMP-3-deoxy-beta-D-manno-octulosonate + diphosphate. The protein operates within nucleotide-sugar biosynthesis; CMP-3-deoxy-D-manno-octulosonate biosynthesis; CMP-3-deoxy-D-manno-octulosonate from 3-deoxy-D-manno-octulosonate and CTP: step 1/1. It participates in bacterial outer membrane biogenesis; lipopolysaccharide biosynthesis. Functionally, activates KDO (a required 8-carbon sugar) for incorporation into bacterial lipopolysaccharide in Gram-negative bacteria. The chain is 3-deoxy-manno-octulosonate cytidylyltransferase from Marinomonas sp. (strain MWYL1).